The following is a 713-amino-acid chain: Topoisomerase subunit TopoM (713 aa).

One can recognise a Topo IIA-type catalytic domain in the interval 41 to 504 (IPSAYDGLKP…DATPVSRGDE (464 aa)). The active-site O-(5'-phospho-DNA)-tyrosine intermediate is the Y128. Residues 694–713 (NRAKASIKGSGADVTPAPAE) are disordered.

It belongs to the type II topoisomerase GyrA/ParC subunit family. In terms of assembly, a complex of TopoN and TopoM, possibly a heterotetramer. It depends on Mg(2+) as a cofactor.

The enzyme catalyses ATP-dependent breakage, passage and rejoining of double-stranded DNA.. Inhibited by quinolone antibiotic ciprofloxacin and coumarin antibiotic novobiocin, but at much higher concentrations than is usual for DNA gyrase/topoisomerase. Its function is as follows. Catalyzes the relaxation of negatively supercoiled DNA in the presence of ATP or dATP but not other nucleotides. Individual subunits have no activity. Not able to negatively supercoil DNA, it can however introduce positive supercoils in DNA. Relaxes positive supercoils in an ATP-dependent manner. Catenates and decatenates DNA. Generates dsDNA breaks in the presence of the quinolone antibiotic ciprofloxacin, showing it is a topoisomerase. The protein is Topoisomerase subunit TopoM of Mycolicibacterium smegmatis (strain ATCC 700084 / mc(2)155) (Mycobacterium smegmatis).